The chain runs to 285 residues: Bifunctional protein FolD (285 aa).

NADP(+)-binding positions include 165 to 167 (GAS) and Ser-190.

This sequence belongs to the tetrahydrofolate dehydrogenase/cyclohydrolase family. Homodimer.

The catalysed reaction is (6R)-5,10-methylene-5,6,7,8-tetrahydrofolate + NADP(+) = (6R)-5,10-methenyltetrahydrofolate + NADPH. The enzyme catalyses (6R)-5,10-methenyltetrahydrofolate + H2O = (6R)-10-formyltetrahydrofolate + H(+). The protein operates within one-carbon metabolism; tetrahydrofolate interconversion. Functionally, catalyzes the oxidation of 5,10-methylenetetrahydrofolate to 5,10-methenyltetrahydrofolate and then the hydrolysis of 5,10-methenyltetrahydrofolate to 10-formyltetrahydrofolate. The chain is Bifunctional protein FolD from Cupriavidus metallidurans (strain ATCC 43123 / DSM 2839 / NBRC 102507 / CH34) (Ralstonia metallidurans).